We begin with the raw amino-acid sequence, 312 residues long: D-alanine--D-alanine ligase (312 aa).

The region spanning 108–308 (KLVWQQTGIP…YSELVVKVLS (201 aa)) is the ATP-grasp domain. 138 to 193 (VAKLGVPLFVKPASEGSSVAVEKVKSADALPAALEEAAKHDKIVIVEKSIEGGGEY) contacts ATP. Residues aspartate 262, glutamate 275, and asparagine 277 each contribute to the Mg(2+) site.

This sequence belongs to the D-alanine--D-alanine ligase family. Mg(2+) is required as a cofactor. It depends on Mn(2+) as a cofactor.

It localises to the cytoplasm. The catalysed reaction is 2 D-alanine + ATP = D-alanyl-D-alanine + ADP + phosphate + H(+). It participates in cell wall biogenesis; peptidoglycan biosynthesis. In terms of biological role, cell wall formation. The sequence is that of D-alanine--D-alanine ligase from Burkholderia mallei (strain NCTC 10247).